The primary structure comprises 244 residues: MRSVRMRAELDGMHVSGAERVIPHYELEKVVMELLKRPKRYDKIVITIERVENLETIPKSLPIKSHDFADVEQAHEFVIKKLKEIGIEESITQKALKLLTEGPNPKGGNMRGAVLMDPVSGERLEPDQERGIRTTRIDWRNRTAIKEALRERGIKKFYLERLIDALAIATKNIHCGVIAEICWSDDPEYTTGYIASKEFGYIRIKPMKEEHTPTGGRVYFVKRESLQELIECLERKVMLIEQLL.

It belongs to the BioW family. As to quaternary structure, homodimer. It depends on Mg(2+) as a cofactor.

The catalysed reaction is heptanedioate + ATP + CoA = 6-carboxyhexanoyl-CoA + AMP + diphosphate. It participates in metabolic intermediate metabolism; pimeloyl-CoA biosynthesis; pimeloyl-CoA from pimelate: step 1/1. In terms of biological role, catalyzes the transformation of pimelate into pimeloyl-CoA with concomitant hydrolysis of ATP to AMP. The protein is 6-carboxyhexanoate--CoA ligase of Hydrogenobacter thermophilus (strain DSM 6534 / IAM 12695 / TK-6).